The primary structure comprises 1145 residues: DNA polymerase subunit gamma-1, mitochondrial (1145 aa).

A mitochondrion-targeting transit peptide spans Met1–Tyr9.

This sequence belongs to the DNA polymerase type-A family. Component of the DNA polymerase gamma complex consisting of two subunits: the catalytic subunit DNApol-gamma/DNApolG1 and the accessory subunit PolG2/DNApol-gamma35. The cofactor is Mg(2+).

It localises to the mitochondrion. The enzyme catalyses DNA(n) + a 2'-deoxyribonucleoside 5'-triphosphate = DNA(n+1) + diphosphate. With respect to regulation, stimulated by KCl, and inhibited by the small molecules o 2',3'-dideoxythymidine 5'-triphosphate (d2TTP) and N-ethylmaleimide (NEM). Functionally, as the catalytic component of the DNA polymerase gamma complex is involved in the replication of mitochondrial DNA (mtDNA). Has both 5'-3' DNA polymerase and a highly mispair-specific 3'-5' exonuclease activity. At the end of mtDNA replication DNA ends are ligated to produce a closed circular mtDNA molecule, its exonuclease activity is required for formation of these ligatable ends by preventing DNA synthesis from continuing past the 5'-end of downstream DNA into duplex DNA regions. Does not possess DNA primase activity, does not catalyze strand displacement synthesis and does not contain a 5'-3' exonuclease activity to catalyze nick translation. Important for promoting the elimination of paternal mitochondrial DNA during spermatogenesis, however its exact role in this function has not yet been identified and appears to be independent of its 3'-5'-exonuclease activity and only partially dependent on its DNA polymerase activity. This is DNA polymerase subunit gamma-1, mitochondrial from Drosophila melanogaster (Fruit fly).